A 231-amino-acid polypeptide reads, in one-letter code: Large ribosomal subunit protein uL1 (231 aa).

Belongs to the universal ribosomal protein uL1 family. Part of the 50S ribosomal subunit.

In terms of biological role, binds directly to 23S rRNA. The L1 stalk is quite mobile in the ribosome, and is involved in E site tRNA release. Protein L1 is also a translational repressor protein, it controls the translation of the L11 operon by binding to its mRNA. In Agrobacterium fabrum (strain C58 / ATCC 33970) (Agrobacterium tumefaciens (strain C58)), this protein is Large ribosomal subunit protein uL1.